The sequence spans 306 residues: Pantothenate kinase (306 aa).

An ATP-binding site is contributed by 91-98 (GSVAVGKS).

The protein belongs to the prokaryotic pantothenate kinase family.

It localises to the cytoplasm. The catalysed reaction is (R)-pantothenate + ATP = (R)-4'-phosphopantothenate + ADP + H(+). It functions in the pathway cofactor biosynthesis; coenzyme A biosynthesis; CoA from (R)-pantothenate: step 1/5. This is Pantothenate kinase from Streptococcus pneumoniae serotype 2 (strain D39 / NCTC 7466).